The chain runs to 63 residues: Antimicrobial peptide 2 (63 aa).

The N-terminal stretch at 1–27 is a signal peptide; sequence MAKVPIAFLKFVIVLILFIAMSGMIEA. 3 disulfides stabilise this stretch: cysteine 28/cysteine 45, cysteine 35/cysteine 49, and cysteine 44/cysteine 60.

It belongs to the AMP family. As to quaternary structure, homodimer. Seed specific.

It localises to the secreted. In terms of biological role, possesses antifungal activity and is also active on two tested Gram-positive bacteria but is non-toxic for Gram-negative bacteria and cultured human cells. This chain is Antimicrobial peptide 2 (AMP2), found in Mirabilis jalapa (Garden four-o'clock).